The sequence spans 64 residues: Large ribosomal subunit protein bL35 (64 aa).

The tract at residues 22 to 44 is disordered; that stretch reads IMKQQAGMRHNLEVKSSKRKARL.

It belongs to the bacterial ribosomal protein bL35 family.

This is Large ribosomal subunit protein bL35 from Clavibacter sepedonicus (Clavibacter michiganensis subsp. sepedonicus).